A 315-amino-acid polypeptide reads, in one-letter code: Aspartate carbamoyltransferase catalytic subunit (315 aa).

Carbamoyl phosphate is bound by residues arginine 65 and threonine 66. Lysine 93 serves as a coordination point for L-aspartate. The carbamoyl phosphate site is built by arginine 115, histidine 145, and glutamine 148. Arginine 179 and arginine 234 together coordinate L-aspartate. Residues glycine 275 and proline 276 each contribute to the carbamoyl phosphate site.

The protein belongs to the aspartate/ornithine carbamoyltransferase superfamily. ATCase family. As to quaternary structure, heterododecamer (2C3:3R2) of six catalytic PyrB chains organized as two trimers (C3), and six regulatory PyrI chains organized as three dimers (R2).

The enzyme catalyses carbamoyl phosphate + L-aspartate = N-carbamoyl-L-aspartate + phosphate + H(+). It participates in pyrimidine metabolism; UMP biosynthesis via de novo pathway; (S)-dihydroorotate from bicarbonate: step 2/3. Functionally, catalyzes the condensation of carbamoyl phosphate and aspartate to form carbamoyl aspartate and inorganic phosphate, the committed step in the de novo pyrimidine nucleotide biosynthesis pathway. This chain is Aspartate carbamoyltransferase catalytic subunit, found in Xanthomonas euvesicatoria pv. vesicatoria (strain 85-10) (Xanthomonas campestris pv. vesicatoria).